Consider the following 729-residue polypeptide: Glycerophosphodiester phosphodiesterase GDPDL5 (729 aa).

An N-terminal signal peptide occupies residues 1–22; the sequence is MACPRVIFLILITFFILQTAFS. 2 consecutive GP-PDE domains span residues 33-320 and 337-645; these read PAVI…YRAI and ITII…ARYR. 9 N-linked (GlcNAc...) asparagine glycosylation sites follow: Asn-88, Asn-162, Asn-218, Asn-227, Asn-285, Asn-302, Asn-390, Asn-401, and Asn-507. Residues 709 to 729 traverse the membrane as a helical segment; the sequence is AIEVPFAFIAMAILVCFFISV.

This sequence belongs to the glycerophosphoryl diester phosphodiesterase family. In terms of tissue distribution, expressed in stems, flowers and siliques.

Its subcellular location is the membrane. It carries out the reaction a sn-glycero-3-phosphodiester + H2O = an alcohol + sn-glycerol 3-phosphate + H(+). The polypeptide is Glycerophosphodiester phosphodiesterase GDPDL5 (Arabidopsis thaliana (Mouse-ear cress)).